The primary structure comprises 290 residues: Protease HtpX (290 aa).

2 consecutive transmembrane segments (helical) span residues 12 to 32 (IAVM…GLLA) and 42 to 62 (ALLV…LLIS). His147 contacts Zn(2+). Glu148 is an active-site residue. His151 provides a ligand contact to Zn(2+). A run of 2 helical transmembrane segments spans residues 162–182 (LIQG…GHVV) and 197–217 (FWIV…MIVM). Glu224 provides a ligand contact to Zn(2+).

It belongs to the peptidase M48B family. Requires Zn(2+) as cofactor.

It is found in the cell inner membrane. The polypeptide is Protease HtpX (Pseudoalteromonas atlantica (strain T6c / ATCC BAA-1087)).